We begin with the raw amino-acid sequence, 391 residues long: Polyketide synthase 3 (391 aa).

Cys164 is a catalytic residue.

Belongs to the thiolase-like superfamily. Chalcone/stilbene synthases family. As to quaternary structure, homodimer.

It carries out the reaction (E)-4-coumaroyl-CoA + 3 malonyl-CoA + 3 H(+) = 2',4,4',6'-tetrahydroxychalcone + 3 CO2 + 4 CoA. It participates in secondary metabolite biosynthesis; flavonoid biosynthesis. In terms of biological role, polyketide synthase producing p-coumaryltriacetic acid lactone (CTAL) and slightly naringenin chalcone. Can use p-coumaryl-CoA as substrate. The polypeptide is Polyketide synthase 3 (PKS3) (Rubus idaeus (Raspberry)).